The primary structure comprises 752 residues: Myb-related protein A (752 aa).

The disordered stretch occupies residues 1–22 (MAKRSRSEDEDDDLQYADHDYE). HTH myb-type domains follow at residues 30–81 (KKLW…QKVL), 82–137 (NPEL…NPEV), and 138–188 (KKSS…RRKV). DNA-binding regions (H-T-H motif) lie at residues 58-81 (WTLIASHLQNRSDFQCQHRWQKVL), 110-133 (WSLIAKHLKGRIGKQCRERWHNHL), and 161-184 (WAEIAKLLPGRTDNSIKNHWNSTM). K199 is covalently cross-linked (Glycyl lysine isopeptide (Lys-Gly) (interchain with G-Cter in SUMO2)). The interval 230–295 (IPGYQYVSPE…RIPSQPGSFS (66 aa)) is transcriptional activation domain. The negative regulatory domain stretch occupies residues 298-553 (SGSFLMDDNM…IRRSILGTTP (256 aa)). K394 is subject to N6-acetyllysine. Residues 451–480 (RKMRVGHSPGSELRDGSLNDGGNMALKHTP) form a disordered region. Glycyl lysine isopeptide (Lys-Gly) (interchain with G-Cter in SUMO2) cross-links involve residues K592 and K602.

In terms of assembly, component of the DREAM complex (also named LINC complex) at least composed of E2F4, E2F5, LIN9, LIN37, LIN52, LIN54, MYBL1, MYBL2, RBL1, RBL2, RBBP4, TFDP1 and TFDP2. The complex exists in quiescent cells where it represses cell cycle-dependent genes. It dissociates in S phase when LIN9, LIN37, LIN52 and LIN54 form a subcomplex that binds to MYBL2. Expressed in a variety of lymphoid and solid tumor lines cultured in vitro.

The protein localises to the nucleus. Its function is as follows. Transcription factor that specifically recognizes the sequence 5'-YAAC[GT]G-3'. Acts as a master regulator of male meiosis by promoting expression of piRNAs: activates expression of both piRNA precursor RNAs and expression of protein-coding genes involved in piRNA metabolism. The piRNA metabolic process mediates the repression of transposable elements during meiosis by forming complexes composed of piRNAs and Piwi proteins and governs the methylation and subsequent repression of transposons, which is essential for the germline integrity. Transcriptional activator of SOX30. This Homo sapiens (Human) protein is Myb-related protein A (MYBL1).